The following is a 78-amino-acid chain: Delta-conotoxin-like S6.8 (78 aa).

The first 22 residues, 1–22 (MKLTCMMIVAVLFLTAWTFVTA), serve as a signal peptide directing secretion. A propeptide spanning residues 23 to 53 (DDSRNGLKNLFPKARHEMKNPDASKLNKRDG) is cleaved from the precursor. Cystine bridges form between C54–C69, C61–C73, and C68–C77.

Belongs to the conotoxin O1 superfamily. In terms of tissue distribution, expressed by the venom duct.

It is found in the secreted. In terms of biological role, delta-conotoxins bind to site 6 of voltage-gated sodium channels (Nav) and inhibit the inactivation process. The protein is Delta-conotoxin-like S6.8 of Conus striatus (Striated cone).